We begin with the raw amino-acid sequence, 1229 residues long: Receptor-type adenylate cyclase GRESAG 4.3 (1229 aa).

The Cytoplasmic segment spans residues 1 to 24; sequence MIARVCRLTKHSKPPHLPITLTTP. Residues 25–45 form a helical membrane-spanning segment; that stretch reads TLFLVVLVLLQLHPICVLVNV. The Extracellular portion of the chain corresponds to 46–845; it reads DDGGGVTVKA…PNGNALTPAQ (800 aa). Residues asparagine 77, asparagine 84, asparagine 626, asparagine 693, and asparagine 768 are each glycosylated (N-linked (GlcNAc...) asparagine). Residues 846 to 866 form a helical membrane-spanning segment; sequence LAGVVGGSLFVVALAICLSVL. At 867–1229 the chain is on the cytoplasmic side; that stretch reads ACFTLRGTRD…SNDLSDMIRV (363 aa). Residues 889–1043 form the Guanylate cyclase domain; it reads TLIFTDIESS…RTSNMAARTE (155 aa). Residues aspartate 894 and aspartate 937 each contribute to the Mg(2+) site.

It belongs to the adenylyl cyclase class-3 family. Mg(2+) is required as a cofactor.

It is found in the membrane. The enzyme catalyses ATP = 3',5'-cyclic AMP + diphosphate. Functionally, could act as a receptor for an unknown ligand. This Trypanosoma brucei brucei protein is Receptor-type adenylate cyclase GRESAG 4.3 (GRESAG 4.3).